The primary structure comprises 97 residues: uncharacterized protein (97 aa).

The segment covering 1 to 20 (MAKEQTDRTTLDLFAHERRP) has biased composition (basic and acidic residues). The disordered stretch occupies residues 1–30 (MAKEQTDRTTLDLFAHERRPGRPKTNPLSR).

This is an uncharacterized protein from Escherichia coli O157:H7.